The chain runs to 324 residues: Beta-ketoacyl-[acyl-carrier-protein] synthase III (324 aa).

Active-site residues include Cys-112 and His-249. Residues Gln-250–Arg-254 are ACP-binding. Asn-279 is a catalytic residue.

Belongs to the thiolase-like superfamily. FabH family. As to quaternary structure, homodimer.

Its subcellular location is the cytoplasm. It catalyses the reaction malonyl-[ACP] + acetyl-CoA + H(+) = 3-oxobutanoyl-[ACP] + CO2 + CoA. The protein operates within lipid metabolism; fatty acid biosynthesis. Catalyzes the condensation reaction of fatty acid synthesis by the addition to an acyl acceptor of two carbons from malonyl-ACP. Catalyzes the first condensation reaction which initiates fatty acid synthesis and may therefore play a role in governing the total rate of fatty acid production. Possesses both acetoacetyl-ACP synthase and acetyl transacylase activities. Its substrate specificity determines the biosynthesis of branched-chain and/or straight-chain of fatty acids. This is Beta-ketoacyl-[acyl-carrier-protein] synthase III from Streptococcus pyogenes serotype M6 (strain ATCC BAA-946 / MGAS10394).